We begin with the raw amino-acid sequence, 323 residues long: L-lactate dehydrogenase (323 aa).

NAD(+)-binding residues include V11, D32, and Y63. Residues Q80 and R86 each contribute to the substrate site. Residues S99, 116–118 (VSN), and S141 contribute to the NAD(+) site. Position 118-121 (118-121 (NPVD)) interacts with substrate. 146 to 149 (DTAR) is a binding site for substrate. Positions 151 and 166 each coordinate beta-D-fructose 1,6-bisphosphate. The Proton acceptor role is filled by H173. Residue Y221 is modified to Phosphotyrosine. T230 contacts substrate.

It belongs to the LDH/MDH superfamily. LDH family. In terms of assembly, homotetramer.

The protein resides in the cytoplasm. The enzyme catalyses (S)-lactate + NAD(+) = pyruvate + NADH + H(+). Its pathway is fermentation; pyruvate fermentation to lactate; (S)-lactate from pyruvate: step 1/1. Allosterically activated by fructose 1,6-bisphosphate (FBP). Functionally, catalyzes the conversion of lactate to pyruvate. In Kosmotoga olearia (strain ATCC BAA-1733 / DSM 21960 / TBF 19.5.1), this protein is L-lactate dehydrogenase.